The primary structure comprises 602 residues: Elongation factor 4 (602 aa).

Residues 7–189 (KYIRNFSIVA…AIVNKVPAPE (183 aa)) form the tr-type G domain. GTP-binding positions include 19–24 (DHGKST) and 136–139 (NKID).

This sequence belongs to the TRAFAC class translation factor GTPase superfamily. Classic translation factor GTPase family. LepA subfamily.

The protein resides in the cell membrane. It catalyses the reaction GTP + H2O = GDP + phosphate + H(+). Functionally, required for accurate and efficient protein synthesis under certain stress conditions. May act as a fidelity factor of the translation reaction, by catalyzing a one-codon backward translocation of tRNAs on improperly translocated ribosomes. Back-translocation proceeds from a post-translocation (POST) complex to a pre-translocation (PRE) complex, thus giving elongation factor G a second chance to translocate the tRNAs correctly. Binds to ribosomes in a GTP-dependent manner. The polypeptide is Elongation factor 4 (Clostridium botulinum (strain Okra / Type B1)).